The primary structure comprises 59 residues: Cortexin domain-containing 1 protein (59 aa).

A helical transmembrane segment spans residues 17–37; the sequence is LTLACFVFLCLFLVVMIIRCA.

The protein resides in the membrane. In Homo sapiens (Human), this protein is Cortexin domain-containing 1 protein.